A 456-amino-acid chain; its full sequence is Glutamyl-tRNA(Gln) amidotransferase subunit A (456 aa).

Residues lysine 74 and serine 149 each act as charge relay system in the active site. Catalysis depends on serine 173, which acts as the Acyl-ester intermediate.

This sequence belongs to the amidase family. GatA subfamily. In terms of assembly, heterotrimer of A, B and C subunits.

It carries out the reaction L-glutamyl-tRNA(Gln) + L-glutamine + ATP + H2O = L-glutaminyl-tRNA(Gln) + L-glutamate + ADP + phosphate + H(+). Functionally, allows the formation of correctly charged Gln-tRNA(Gln) through the transamidation of misacylated Glu-tRNA(Gln) in organisms which lack glutaminyl-tRNA synthetase. The reaction takes place in the presence of glutamine and ATP through an activated gamma-phospho-Glu-tRNA(Gln). In Methanobrevibacter smithii (strain ATCC 35061 / DSM 861 / OCM 144 / PS), this protein is Glutamyl-tRNA(Gln) amidotransferase subunit A.